A 128-amino-acid chain; its full sequence is Large ribosomal subunit protein bL17 (128 aa).

This sequence belongs to the bacterial ribosomal protein bL17 family. As to quaternary structure, part of the 50S ribosomal subunit. Contacts protein L32.

The protein is Large ribosomal subunit protein bL17 of Pseudomonas syringae pv. tomato (strain ATCC BAA-871 / DC3000).